The chain runs to 831 residues: AdoMet-dependent rRNA methyltransferase SPB1 (831 aa).

Positions 58, 60, 78, 94, and 119 each coordinate S-adenosyl-L-methionine. Lysine 159 serves as the catalytic Proton acceptor. 2 coiled-coil regions span residues 346–389 and 440–479; these read LTED…QMNM and NDIN…ERDA. 2 disordered regions span residues 492–535 and 565–645; these read DEGW…ADQR and MNKK…DQQS. The segment covering 499-510 has biased composition (basic and acidic residues); that stretch reads ESDKEGSDKETE. 3 stretches are compositionally biased toward acidic residues: residues 511–526, 594–611, and 618–631; these read ANDY…DDDE, MEVD…DSDF, and PDEE…DNEN. The segment covering 632-645 has biased composition (basic and acidic residues); it reads DVSRKYSKAKDQQS. Residues 729–782 adopt a coiled-coil conformation; that stretch reads LEAQGRKKLRALKRLEKLKKKSDMINEDSAKSERDKADEIQKLMKKLTKKQKTK.

The protein belongs to the class I-like SAM-binding methyltransferase superfamily. RNA methyltransferase RlmE family. SPB1 subfamily. In terms of assembly, component of the nucleolar and nucleoplasmic pre-60S ribosomal particle.

Its subcellular location is the nucleus. The protein localises to the nucleolus. It catalyses the reaction a ribonucleotide in rRNA + S-adenosyl-L-methionine = a 2'-O-methylribonucleotide in rRNA + S-adenosyl-L-homocysteine + H(+). In terms of biological role, required for proper assembly of pre-ribosomal particles during the biogenesis of the 60S ribosomal subunit. This chain is AdoMet-dependent rRNA methyltransferase SPB1, found in Debaryomyces hansenii (strain ATCC 36239 / CBS 767 / BCRC 21394 / JCM 1990 / NBRC 0083 / IGC 2968) (Yeast).